Reading from the N-terminus, the 1402-residue chain is DNA-directed RNA polymerase subunit beta' (1402 aa).

Positions 71, 73, 86, and 89 each coordinate Zn(2+). Mg(2+) contacts are provided by Asp-462, Asp-464, and Asp-466. Cys-811, Cys-885, Cys-892, and Cys-895 together coordinate Zn(2+). The tract at residues 1379–1402 (RKGTGAGSANQMLQDMTDQVPAAE) is disordered. Residues 1385-1395 (GSANQMLQDMT) show a composition bias toward polar residues.

It belongs to the RNA polymerase beta' chain family. As to quaternary structure, the RNAP catalytic core consists of 2 alpha, 1 beta, 1 beta' and 1 omega subunit. When a sigma factor is associated with the core the holoenzyme is formed, which can initiate transcription. The cofactor is Mg(2+). Requires Zn(2+) as cofactor.

It carries out the reaction RNA(n) + a ribonucleoside 5'-triphosphate = RNA(n+1) + diphosphate. Its function is as follows. DNA-dependent RNA polymerase catalyzes the transcription of DNA into RNA using the four ribonucleoside triphosphates as substrates. This Agrobacterium fabrum (strain C58 / ATCC 33970) (Agrobacterium tumefaciens (strain C58)) protein is DNA-directed RNA polymerase subunit beta'.